We begin with the raw amino-acid sequence, 540 residues long: MLRMDTVHRDKDQVVILKKTNYLPYLVNLFIPKLFYPEKIVVARLYLNVNKHDKHAAENFKGTETPCFDVPPSLFSDKVPMDKIVFLPTVMLPMGFEAGGVFGPGVLTRRSYPIDLKAAGHKGQTPPLFIGLLMDIQAPTKVESLLKEVGESQPAQDILMNWVRASNNLINGEQPKEQELRDEFSLSMVFNLPTPPSPPSPYPYGRIPLQFNIYTPDLSNVLLLMSHQRDLTVAILSTINNPHVPSVAFAAMGDEEECPKFELPLSAFPTFEGVNRPIFLPKRFMPKGFEAGCVLKPGALSDLWFMDHIGRFGPTQPQHNGSITPPLFVGKICREEPTVDMIRKIQLEIEKKASEDATLPAVKPKIDISITKGFMVMETAAEDPKPPKGAYSVQSYEEAFDDGCVVKVAKRVATEATDTRGRDEIRTSCDQSQEKDEGSAEADKKHLSCFHVDSDIDNIAMAMARMGVADMSLPAEGEAMPGIDGDRALIQLSHVMEDRNQIRTHTDQLMQDHIFRMNSNRMLALRQPFTCIGCGAQENK.

Residues 416–443 are disordered; the sequence is ATDTRGRDEIRTSCDQSQEKDEGSAEAD. Positions 417 to 443 are enriched in basic and acidic residues; that stretch reads TDTRGRDEIRTSCDQSQEKDEGSAEAD.

This sequence belongs to the DM7 family.

This Drosophila simulans (Fruit fly) protein is DM7 family protein GD24576.